The primary structure comprises 141 residues: Photosystem II protein PSBR, chloroplastic (141 aa).

Residues 1–27 (MATMQISAKGLAPLRPRVSSRRVVKPV) constitute a chloroplast transit peptide. Phosphothreonine is present on residues Thr34 and Thr37. At Ser43 the chain carries Phosphoserine. A helical transmembrane segment spans residues 114–134 (GLIAWAGLVLVLLAVGVNLII).

This sequence belongs to the psbR family.

The protein localises to the plastid. It is found in the chloroplast thylakoid membrane. Associated with the oxygen-evolving complex of photosystem II (PSII). Is required for the stable binding of LHCSR3 to PSII-LHCII supercomplexes and is essential for efficient energy-dependent quenching and the integrity of the PSII-LHCII-LHCSR3 supercomplex under continuous high light. This Chlamydomonas reinhardtii (Chlamydomonas smithii) protein is Photosystem II protein PSBR, chloroplastic.